A 1252-amino-acid polypeptide reads, in one-letter code: LRR receptor-like serine/threonine-protein kinase GSO2 (1252 aa).

The signal sequence occupies residues 1-22 (MQQNSVLLALFFLCFSSGLGSG). The Extracellular segment spans residues 23 to 876 (QPGQRDDLQT…QRSLSPKTVV (854 aa)). 3 N-linked (GlcNAc...) asparagine glycosylation sites follow: asparagine 62, asparagine 77, and asparagine 117. LRR repeat units follow at residues 94–118 (FNNL…LSNL), 120–143 (SSLE…LGSL), 144–166 (VNLK…TFGN), 168–190 (VNLQ…RFGR), 191–215 (LVQL…IGNC), 217–239 (SLAL…LNRL), 240–263 (KNLQ…LGDL), 265–286 (SIQY…RLTE), 287–310 (LANL…EFWR), and 312–335 (NQLE…ICSN). An N-linked (GlcNAc...) asparagine glycan is attached at asparagine 157. Residues asparagine 214 and asparagine 229 are each glycosylated (N-linked (GlcNAc...) asparagine). N-linked (GlcNAc...) asparagine glycosylation is present at asparagine 299. Asparagine 336 carries N-linked (GlcNAc...) asparagine glycosylation. 21 LRR repeats span residues 337–360 (TSLK…ISNC), 361–384 (QSLK…LFQL), 386–408 (ELTN…ISNL), 409–433 (TNLQ…GFLG), 435–456 (LEIM…IGNC), 457–480 (TRLQ…IGRL), 481–504 (KDLT…LGNC), 506–528 (QMTV…FGFL), 529–552 (TALE…LINL), 554–575 (NLTR…LCGS), 577–599 (SYLS…LGKS), 600–622 (TNLD…TFGK), 623–648 (ISEL…GLCK), 650–670 (LTHI…WLGK), 671–695 (LPLL…IFSL), 697–719 (NILT…IGNL), 720–743 (QALN…IGKL), 745–767 (KLFE…IGQL), 768–792 (QDLQ…ISTL), 793–816 (PKLE…IGDM), and 818–839 (SLGY…QFSR). Asparagine 370, asparagine 394, and asparagine 407 each carry an N-linked (GlcNAc...) asparagine glycan. Asparagine 455 is a glycosylation site (N-linked (GlcNAc...) asparagine). N-linked (GlcNAc...) asparagine glycans are attached at residues asparagine 538, asparagine 554, asparagine 559, and asparagine 566. Asparagine 709 carries N-linked (GlcNAc...) asparagine glycosylation. Asparagine 780 carries an N-linked (GlcNAc...) asparagine glycan. N-linked (GlcNAc...) asparagine glycosylation occurs at asparagine 823. A helical transmembrane segment spans residues 877-897 (IISAISSLAAIALMVLVIILF). Over 898–1252 (FKQNHDLFKK…YREMQTDTDK (355 aa)) the chain is Cytoplasmic. At threonine 945 the chain carries Phosphothreonine. The Protein kinase domain maps to 948–1232 (LNEEFMIGSG…PSSRQASEYL (285 aa)). ATP-binding positions include 954-962 (IGSGGSGKV) and lysine 976. Phosphotyrosine is present on residues tyrosine 1024 and tyrosine 1066. Catalysis depends on aspartate 1079, which acts as the Proton acceptor. Residue serine 1114 is modified to Phosphoserine. A phosphotyrosine mark is found at tyrosine 1124 and tyrosine 1131.

The protein belongs to the protein kinase superfamily. Ser/Thr protein kinase family. As to quaternary structure, interacts with CIF1 and CIF2. In terms of tissue distribution, mostly expressed in siliques, seeds, developing embryos and seedlings, detected in flower buds, but not in roots, leaves or stems.

It localises to the cell membrane. It catalyses the reaction L-seryl-[protein] + ATP = O-phospho-L-seryl-[protein] + ADP + H(+). The enzyme catalyses L-threonyl-[protein] + ATP = O-phospho-L-threonyl-[protein] + ADP + H(+). Together with GSO1, receptor-like serine/threonine-kinase required during the development of the epidermal surface in embryos and cotyledons. Involved in the nuclear division phase of megagametogenesis. In coordination with GSO2, regulates root growth through control of cell division and cell fate specification. Controls seedling root growth by modulating sucrose response after germination. Receptor of the peptide hormones CIF1 and CIF2 required for contiguous Casparian strip diffusion barrier formation in roots. This chain is LRR receptor-like serine/threonine-protein kinase GSO2, found in Arabidopsis thaliana (Mouse-ear cress).